The chain runs to 700 residues: Phosphoribosylformylglycinamidine synthase subunit PurL (700 aa).

His34 is a catalytic residue. An ATP-binding site is contributed by Tyr37. Glu79 is a Mg(2+) binding site. Substrate-binding positions include 80–83 (SHNH) and Arg102. His81 (proton acceptor) is an active-site residue. Asp103 is a Mg(2+) binding site. Residue Gln227 coordinates substrate. Asp255 contacts Mg(2+). 299–301 (ESQ) lines the substrate pocket. Residues Asp476 and Gly513 each coordinate ATP. Residue Asn514 participates in Mg(2+) binding. Ser516 lines the substrate pocket.

Belongs to the FGAMS family. In terms of assembly, monomer. Part of the FGAM synthase complex composed of 1 PurL, 1 PurQ and 2 PurS subunits.

The protein resides in the cytoplasm. It catalyses the reaction N(2)-formyl-N(1)-(5-phospho-beta-D-ribosyl)glycinamide + L-glutamine + ATP + H2O = 2-formamido-N(1)-(5-O-phospho-beta-D-ribosyl)acetamidine + L-glutamate + ADP + phosphate + H(+). It participates in purine metabolism; IMP biosynthesis via de novo pathway; 5-amino-1-(5-phospho-D-ribosyl)imidazole from N(2)-formyl-N(1)-(5-phospho-D-ribosyl)glycinamide: step 1/2. Functionally, part of the phosphoribosylformylglycinamidine synthase complex involved in the purines biosynthetic pathway. Catalyzes the ATP-dependent conversion of formylglycinamide ribonucleotide (FGAR) and glutamine to yield formylglycinamidine ribonucleotide (FGAM) and glutamate. The FGAM synthase complex is composed of three subunits. PurQ produces an ammonia molecule by converting glutamine to glutamate. PurL transfers the ammonia molecule to FGAR to form FGAM in an ATP-dependent manner. PurS interacts with PurQ and PurL and is thought to assist in the transfer of the ammonia molecule from PurQ to PurL. The protein is Phosphoribosylformylglycinamidine synthase subunit PurL of Halobacterium salinarum (strain ATCC 29341 / DSM 671 / R1).